The primary structure comprises 283 residues: Transmembrane protein 45B (283 aa).

Helical transmembrane passes span 7-27 (HALP…KCPF), 55-75 (LIEG…EQFV), 99-119 (MYLF…SHHV), 121-141 (VGLD…LFYF), 153-173 (IHSL…MEVF), 187-207 (LAIL…PLSG), and 218-238 (IMFI…IVGI). A disordered region spans residues 261–283 (GLRKSTSTDSSSQKALLQESDEE). A compositionally biased stretch (polar residues) spans 264–275 (KSTSTDSSSQKA).

The protein belongs to the TMEM45 family.

It is found in the membrane. This is Transmembrane protein 45B (tmem45b) from Danio rerio (Zebrafish).